The primary structure comprises 351 residues: Biotin synthase (351 aa).

The 219-residue stretch at 44–262 folds into the Radical SAM core domain; sequence NRVQVSTLLS…LAVARIMMPK (219 aa). The [4Fe-4S] cluster site is built by C59, C63, and C66. [2Fe-2S] cluster is bound by residues C103, C134, C194, and R266.

This sequence belongs to the radical SAM superfamily. Biotin synthase family. In terms of assembly, homodimer. It depends on [4Fe-4S] cluster as a cofactor. [2Fe-2S] cluster serves as cofactor.

It carries out the reaction (4R,5S)-dethiobiotin + (sulfur carrier)-SH + 2 reduced [2Fe-2S]-[ferredoxin] + 2 S-adenosyl-L-methionine = (sulfur carrier)-H + biotin + 2 5'-deoxyadenosine + 2 L-methionine + 2 oxidized [2Fe-2S]-[ferredoxin]. It participates in cofactor biosynthesis; biotin biosynthesis; biotin from 7,8-diaminononanoate: step 2/2. Functionally, catalyzes the conversion of dethiobiotin (DTB) to biotin by the insertion of a sulfur atom into dethiobiotin via a radical-based mechanism. The protein is Biotin synthase of Stutzerimonas stutzeri (strain A1501) (Pseudomonas stutzeri).